A 291-amino-acid polypeptide reads, in one-letter code: Pyridoxal 5'-phosphate synthase subunit PdxS (291 aa).

Position 23 (D23) interacts with D-ribose 5-phosphate. K80 serves as the catalytic Schiff-base intermediate with D-ribose 5-phosphate. Residue G152 coordinates D-ribose 5-phosphate. Residue R164 participates in D-glyceraldehyde 3-phosphate binding. Residues G213 and 234–235 (GS) each bind D-ribose 5-phosphate.

Belongs to the PdxS/SNZ family. In terms of assembly, in the presence of PdxT, forms a dodecamer of heterodimers.

The enzyme catalyses aldehydo-D-ribose 5-phosphate + D-glyceraldehyde 3-phosphate + L-glutamine = pyridoxal 5'-phosphate + L-glutamate + phosphate + 3 H2O + H(+). It functions in the pathway cofactor biosynthesis; pyridoxal 5'-phosphate biosynthesis. Its function is as follows. Catalyzes the formation of pyridoxal 5'-phosphate from ribose 5-phosphate (RBP), glyceraldehyde 3-phosphate (G3P) and ammonia. The ammonia is provided by the PdxT subunit. Can also use ribulose 5-phosphate and dihydroxyacetone phosphate as substrates, resulting from enzyme-catalyzed isomerization of RBP and G3P, respectively. This chain is Pyridoxal 5'-phosphate synthase subunit PdxS, found in Bifidobacterium longum (strain NCC 2705).